Reading from the N-terminus, the 117-residue chain is MSESPSANISDADKSAITPTTGDTSQQDVKPSTEHINLKVVGQDNNEVFFKIKKTTEFSKLMKIYCARQGKSMNSLRFLVDGERIRPDQTPAELDMEDGDQIEAVLEQLGGCTHLCL.

Residues 1 to 37 are disordered; sequence MSESPSANISDADKSAITPTTGDTSQQDVKPSTEHIN. Positions 17–30 are enriched in polar residues; sequence ITPTTGDTSQQDVK. Positions 35–115 constitute a Ubiquitin-like domain; the sequence is HINLKVVGQD…LEQLGGCTHL (81 aa). Residue glycine 111 forms a Glycyl lysine isopeptide (Gly-Lys) (interchain with K-? in acceptor proteins) linkage. Positions 112-117 are excised as a propeptide; sequence CTHLCL.

The protein belongs to the ubiquitin family. SUMO subfamily. In terms of assembly, interacts with rfp1.

It is found in the nucleus. Its function is as follows. Required for chromosome segregation where it may be involved in microtubule assembly. Loss of smt3 leads to an increase in telomere length. This Schizosaccharomyces pombe (strain 972 / ATCC 24843) (Fission yeast) protein is Ubiquitin-like protein pmt3/smt3 (pmt3).